Reading from the N-terminus, the 347-residue chain is Suppressor of RNA-mediated gene silencing (347 aa).

Belongs to the phytoreovirus non-structural protein 10 family.

Suppressor of RNA-mediated gene silencing, also known as post-transcriptional gene silencing (PTGS), a mechanism of plant viral defense that limits the accumulation of viral RNAs. This Catharanthus roseus (Madagascar periwinkle) protein is Suppressor of RNA-mediated gene silencing.